The chain runs to 315 residues: Apolipoprotein F (315 aa).

Positions 1-24 are cleaved as a signal peptide; sequence MHSLRLILMSIQLLCYLLLCPVDA. Residues 25–154 constitute a propeptide that is removed on maturation; sequence TSHGEATSVS…EQPGPKRAKR (130 aa).

Belongs to the apolipoprotein F family. As to expression, liver.

The protein localises to the secreted. Its function is as follows. Minor apolipoprotein that associates with LDL. Inhibits cholesteryl ester transfer protein (CETP) activity and appears to be an important regulator of cholesterol transport. Also associates to a lesser degree with VLDL, Apo-AI and Apo-AII. The chain is Apolipoprotein F (Apof) from Mus musculus (Mouse).